Here is a 551-residue protein sequence, read N- to C-terminus: Arylsulfatase (551 aa).

The N-terminal stretch at 1 to 20 is a signal peptide; the sequence is MKSAPFLFLLGLLGLVTAQT. A Blocked amino end (Gln) modification is found at Q21. The Ca(2+) site is built by D60, H61, and C100. Catalysis depends on C100, which acts as the Nucleophile. At C100 the chain carries 3-oxoalanine (Cys). H158 is a catalytic residue. 3 N-linked (GlcNAc...) asparagine glycosylation sites follow: N164, N213, and N296. 2 residues coordinate Ca(2+): D308 and H309.

The protein belongs to the sulfatase family. It depends on Ca(2+) as a cofactor. The conversion to 3-oxoalanine (also known as C-formylglycine, FGly), of a serine or cysteine residue in prokaryotes and of a cysteine residue in eukaryotes, is critical for catalytic activity.

It is found in the cytoplasm. Its subcellular location is the secreted. The protein localises to the extracellular space. The protein resides in the extracellular matrix. It catalyses the reaction an aryl sulfate + H2O = a phenol + sulfate + H(+). Its function is as follows. May be a structural component of the extracellular matrices involved in cell movement during morphogenesis. The polypeptide is Arylsulfatase (Hemicentrotus pulcherrimus (Sea urchin)).